A 231-amino-acid polypeptide reads, in one-letter code: 5'-methylthioadenosine/S-adenosylhomocysteine nucleosidase (231 aa).

E12 serves as the catalytic Proton acceptor. Substrate contacts are provided by residues G78, I153, and 174–175; that span reads ME. The active-site Proton donor is the D198.

Belongs to the PNP/UDP phosphorylase family. MtnN subfamily.

The catalysed reaction is S-adenosyl-L-homocysteine + H2O = S-(5-deoxy-D-ribos-5-yl)-L-homocysteine + adenine. It carries out the reaction S-methyl-5'-thioadenosine + H2O = 5-(methylsulfanyl)-D-ribose + adenine. It catalyses the reaction 5'-deoxyadenosine + H2O = 5-deoxy-D-ribose + adenine. It functions in the pathway amino-acid biosynthesis; L-methionine biosynthesis via salvage pathway; S-methyl-5-thio-alpha-D-ribose 1-phosphate from S-methyl-5'-thioadenosine (hydrolase route): step 1/2. Catalyzes the irreversible cleavage of the glycosidic bond in both 5'-methylthioadenosine (MTA) and S-adenosylhomocysteine (SAH/AdoHcy) to adenine and the corresponding thioribose, 5'-methylthioribose and S-ribosylhomocysteine, respectively. Also cleaves 5'-deoxyadenosine, a toxic by-product of radical S-adenosylmethionine (SAM) enzymes, into 5-deoxyribose and adenine. The protein is 5'-methylthioadenosine/S-adenosylhomocysteine nucleosidase of Maridesulfovibrio salexigens (strain ATCC 14822 / DSM 2638 / NCIMB 8403 / VKM B-1763) (Desulfovibrio salexigens).